A 176-amino-acid polypeptide reads, in one-letter code: F(420)H(2) dehydrogenase subunit J (176 aa).

5 helical membrane-spanning segments follow: residues 13–33 (TAVF…VVIA), 39–59 (AGLA…LLNA), 64–84 (VIQV…AVML), 99–119 (PLAF…AFGT), and 140–160 (IGML…IVLL).

It belongs to the complex I subunit 6 family. In terms of assembly, the FPO complex is composed of at least 13 different subunits. FpoA, FpoH, FpoJ, FpoK, FpoL, FpoM and FpoN proteins constitute the membrane sector of the complex.

The protein localises to the cell membrane. It catalyses the reaction methanophenazine + reduced coenzyme F420-(gamma-L-Glu)(n) = dihydromethanophenazine + oxidized coenzyme F420-(gamma-L-Glu)(n) + H(+). Its function is as follows. Component of the F(420)H(2) dehydrogenase (FPO complex) which is part of the energy-conserving F(420)H(2):heterodisulfide oxidoreductase system. The membrane-bound electron transfer system of the complex plays an important role in the metabolism of methylotrophic methanogens when the organisms grow on methanol or methylamines. Catalyzes the oxidation of methanophenazine to dihydromethanophenazine. It shuttles electrons from F(420)H(2), via FAD and iron-sulfur (Fe-S) centers, to methanophenazine (an electron carrier in the membrane). It couples the redox reaction to proton translocation (for every two electrons transferred, two hydrogen ions are translocated across the cytoplasmic membrane), and thus conserves the redox energy in a proton gradient. It also catalyzes the oxidation of F(420)H(2) with quinones such as 2,3-dimethyl-1,4-naphthoquinone, 2-methyl-1,4-naphthoquinone and tetramethyl-p-benzoquinone. This chain is F(420)H(2) dehydrogenase subunit J (fpoJ), found in Methanosarcina mazei (strain ATCC BAA-159 / DSM 3647 / Goe1 / Go1 / JCM 11833 / OCM 88) (Methanosarcina frisia).